We begin with the raw amino-acid sequence, 225 residues long: Uracil-DNA glycosylase 1 (225 aa).

D68 (proton acceptor) is an active-site residue.

The protein belongs to the uracil-DNA glycosylase (UDG) superfamily. UNG family.

It localises to the cytoplasm. The enzyme catalyses Hydrolyzes single-stranded DNA or mismatched double-stranded DNA and polynucleotides, releasing free uracil.. Its function is as follows. Excises uracil residues from the DNA which can arise as a result of misincorporation of dUMP residues by DNA polymerase or due to deamination of cytosine. This Streptomyces coelicolor (strain ATCC BAA-471 / A3(2) / M145) protein is Uracil-DNA glycosylase 1 (ung1).